Here is a 256-residue protein sequence, read N- to C-terminus: CD209 antigen-like protein 2 (256 aa).

Over 1–50 the chain is Cytoplasmic; that stretch reads MSDSKEPRAQPLGLLEEEELITSSMNFFPRDFGFRQTRGYKSLAGCLGHA. An Endocytosis signal motif is present at residues 14–15; that stretch reads LL. A helical; Signal-anchor for type II membrane protein transmembrane segment spans residues 51-71; it reads PLVLPLLFFTLFTGLLVAILV. Topologically, residues 72-240 are extracellular; sequence QVSKNPSSQR…KSAASCSRDE (169 aa). 3 cysteine pairs are disulfide-bonded: Cys-108/Cys-119, Cys-136/Cys-229, and Cys-208/Cys-221. The region spanning 114–230 is the C-type lectin domain; that stretch reads FFQGNCYFIS…CSAAKFWICK (117 aa). Residues Glu-199, Asn-201, Ile-203, Glu-206, Asn-217, and Asp-218 each coordinate Ca(2+).

In terms of tissue distribution, predominantly expressed in liver and axillary lymph nodes. At very low levels also found in other tissues.

Its subcellular location is the membrane. Probable pathogen-recognition receptor involved in peripheral immune surveillance in liver. May mediate the endocytosis of pathogens which are subsequently degraded in lysosomal compartments. Probably recognizes in a calcium-dependent manner high mannose N-linked oligosaccharides in a variety of pathogen antigens. Is a receptor for ICAM3, probably by binding to mannose-like carbohydrates. The polypeptide is CD209 antigen-like protein 2 (CD209L2) (Macaca mulatta (Rhesus macaque)).